Here is a 398-residue protein sequence, read N- to C-terminus: Phosphoglycerate kinase (398 aa).

Residues Asp21–Asn23, Arg36, His59–Arg62, Arg118, and Arg151 contribute to the substrate site. ATP contacts are provided by residues Lys201, Glu323, and Gly353–Thr356.

This sequence belongs to the phosphoglycerate kinase family. As to quaternary structure, monomer.

It is found in the cytoplasm. The catalysed reaction is (2R)-3-phosphoglycerate + ATP = (2R)-3-phospho-glyceroyl phosphate + ADP. It functions in the pathway carbohydrate degradation; glycolysis; pyruvate from D-glyceraldehyde 3-phosphate: step 2/5. In Ruegeria pomeroyi (strain ATCC 700808 / DSM 15171 / DSS-3) (Silicibacter pomeroyi), this protein is Phosphoglycerate kinase.